Consider the following 725-residue polypeptide: uncharacterized protein (725 aa).

Residues Gly-363 to Cys-556 form the FtsK domain. ATP is bound at residue Gly-382 to Ser-389.

This sequence belongs to the FtsK/SpoIIIE/SftA family.

In terms of biological role, probable DNA motor protein. May track DNA in a ATP-dependent manner by generating positive supercoils in front of it and negative supercoils behind it. This is an uncharacterized protein from Nostoc sp. (strain PCC 7120 / SAG 25.82 / UTEX 2576).